The chain runs to 204 residues: Oxidoreductase iacF (204 aa).

This sequence belongs to the oxidoreductase OpS7 family.

It functions in the pathway secondary metabolite biosynthesis. In terms of biological role, oxidoreductase; part of the gene cluster that mediates the biosynthesis of iso-A82775C, a enylepoxycyclohexane and biosynthetic precursor of the chloropestolide anticancer natural products. Within the cluster, the prenyltransferase iacE prenylates siccayne to generate pestalodiol E, using dimethylallyl diphosphate (DMAPP) as cosubstrate. The probable oxidoreductase iacF is then involved in the epoxidation of pestalodiol F to pestalodiol F, which is further converted to pestalofone A by the short-chain dehydrogenase/reductase iacG. Iso-A82775C is subsequently generated from pestalofone A by the short-chain dehydrogenase/reductase iacC. Iso-A82775C is further condensed with maldoxin via a Diels-Alder reaction to produce the anticancer natural products chloropestolides A to E. The chain is Oxidoreductase iacF from Pestalotiopsis fici (strain W106-1 / CGMCC3.15140).